The chain runs to 198 residues: DnaJ homolog subfamily C member 5 (198 aa).

4 positions are modified to phosphoserine: serine 8, serine 10, serine 12, and serine 15. Residues 13 to 82 (GESLYHVLGL…RNIYDKYGSL (70 aa)) enclose the J domain. Tyrosine 17 carries the phosphotyrosine modification. N6-acetyllysine is present on lysine 56. At serine 151 the chain carries Phosphoserine.

As to quaternary structure, oligomers. Homodimer. Interacts with the chaperone complex consisting of HSC70 and SGTA. Interacts with ZDHHC13 (via ANK repeats). Interacts with ZDHHC17 (via ANK repeats). Interacts with SYT1, SYT5 and SYT7, and with SYT9, forming a complex with SNAP25. In terms of processing, ser-10 phosphorylation induces an order-to-disorder transition triggering the interaction with Lys-58. This conformational switch modulates DNAJC5's cellular functions by reducing binding to syntaxin and synaptogamin without altering HSC70 interactions. Palmitoylated. Could be palmitoylated by DHHC3, DHHC7, DHHC15 and DHHC17. Palmitoylation occurs probably in the cysteine-rich domain and regulates DNAJC5 membrane attachment. Expressed in pancreas, kidney, skeletal muscle, liver, lung, placenta, brain and heart.

It is found in the cytoplasm. Its subcellular location is the cytosol. The protein resides in the membrane. It localises to the cytoplasmic vesicle. The protein localises to the secretory vesicle. It is found in the chromaffin granule membrane. Its subcellular location is the melanosome. The protein resides in the cell membrane. Acts as a general chaperone in regulated exocytosis. Acts as a co-chaperone for the SNARE protein SNAP-25. Involved in the calcium-mediated control of a late stage of exocytosis. May have an important role in presynaptic function. May be involved in calcium-dependent neurotransmitter release at nerve endings. The protein is DnaJ homolog subfamily C member 5 of Homo sapiens (Human).